The following is a 146-amino-acid chain: Ribosomal RNA large subunit methyltransferase H (146 aa).

Residues leucine 68, glycine 95, and 114–119 (LSSLTF) contribute to the S-adenosyl-L-methionine site.

It belongs to the RNA methyltransferase RlmH family. Homodimer.

It localises to the cytoplasm. The catalysed reaction is pseudouridine(1915) in 23S rRNA + S-adenosyl-L-methionine = N(3)-methylpseudouridine(1915) in 23S rRNA + S-adenosyl-L-homocysteine + H(+). Specifically methylates the pseudouridine at position 1915 (m3Psi1915) in 23S rRNA. The chain is Ribosomal RNA large subunit methyltransferase H from Thermodesulfovibrio yellowstonii (strain ATCC 51303 / DSM 11347 / YP87).